The primary structure comprises 376 residues: MKAGATSMWASCCGLLNEVMGTGAVRGQQAGFPGSTGPFRFTPSSDFPTYPPAATEGPNIVCKACGLSFSVFRKKHVCCDCKKDFCSLCSVSQENLRRCSTCHLLQETAFQRPQLMRLKVKDLRQYLLLRNIPTDTCREKEDLVDLVLCHRGLGSGDDLDSSSLNSSRSQTSSFFTQSLFSNYTPPSATVSSFQGELMDRDGAFRSEVLAQVQSEIASANTDDDDDDDDDDDDDEDDDDEQEEEEQNPGLSKKKARASLSDLSSLEEVEGMSVRQLKEILARNFVNYSGCCEKWELVEKVNRLYKENEENQKSYGERMQLQDEEDDSLCRICMDAVIDCVLLECGHMVTCTKCGKRMSECPICRQYVVRAVHVFKS.

The FYVE-type zinc finger occupies glutamate 56–glutamate 107. An SAP 1 domain is found at leucine 115 to threonine 134. Serine 169 carries the post-translational modification Phosphoserine. A disordered region spans residues isoleucine 216–arginine 256. A compositionally biased stretch (acidic residues) spans threonine 221 to glutamine 246. Phosphoserine is present on residues serine 258 and serine 260. The SAP 2 domain occupies valine 268–arginine 282. The RING-type zinc finger occupies cysteine 329–arginine 364.

Interacts with CASP8 and CASP10. Interacts with p53/TP53; involved in p53/TP53 ubiquitination. Interacts (via RING-type zinc finger) with MDM2; the interaction stabilizes MDM2. Interacts (via RING-type zinc finger) with PPARGC1A. Interacts with NOD1. Autoubiquitinated (in vitro). Post-translationally, proteolytically cleaved by caspases upon induction of apoptosis by TNF.

It localises to the cell membrane. It is found in the endomembrane system. The protein resides in the nucleus. Its subcellular location is the nucleus speckle. The protein localises to the cytoplasm. It localises to the cytosol. The enzyme catalyses S-ubiquitinyl-[E2 ubiquitin-conjugating enzyme]-L-cysteine + [acceptor protein]-L-lysine = [E2 ubiquitin-conjugating enzyme]-L-cysteine + N(6)-ubiquitinyl-[acceptor protein]-L-lysine.. The protein operates within protein modification; protein ubiquitination. E3 ubiquitin-protein ligase that regulates several biological processes through the ubiquitin-mediated proteasomal degradation of various target proteins. Ubiquitinates the caspases CASP8 and CASP10, promoting their proteasomal degradation, to negatively regulate cell death downstream of death domain receptors in the extrinsic pathway of apoptosis. May mediate 'Lys-48'-linked polyubiquitination of RIPK1 and its subsequent proteasomal degradation thereby indirectly regulating the tumor necrosis factor-mediated signaling pathway. Negatively regulates p53/TP53 through its direct ubiquitination and targeting to proteasomal degradation. Indirectly, may also negatively regulate p53/TP53 through ubiquitination and degradation of SFN. Mediates PPARGC1A proteasomal degradation probably through ubiquitination thereby indirectly regulating the metabolism of brown fat cells. Possibly involved in innate immunity, through 'Lys-48'-linked polyubiquitination of NOD1 and its subsequent proteasomal degradation. This is E3 ubiquitin-protein ligase RNF34 from Mus musculus (Mouse).